Consider the following 356-residue polypeptide: Dihydroorotate dehydrogenase (quinone) (356 aa).

FMN-binding positions include 60–64 (AGFDK) and Ser84. A substrate-binding site is contributed by Lys64. Position 109-113 (109-113 (NRFGF)) interacts with substrate. Asn140 and Asn171 together coordinate FMN. Asn171 provides a ligand contact to substrate. Catalysis depends on Ser174, which acts as the Nucleophile. Asn176 lines the substrate pocket. Residues Lys216 and Gly244 each coordinate FMN. 245–246 (NT) serves as a coordination point for substrate. Residues Gly267, Gly296, and 317–318 (YS) each bind FMN.

Belongs to the dihydroorotate dehydrogenase family. Type 2 subfamily. In terms of assembly, monomer. FMN is required as a cofactor.

Its subcellular location is the cell membrane. The enzyme catalyses (S)-dihydroorotate + a quinone = orotate + a quinol. Its pathway is pyrimidine metabolism; UMP biosynthesis via de novo pathway; orotate from (S)-dihydroorotate (quinone route): step 1/1. Its function is as follows. Catalyzes the conversion of dihydroorotate to orotate with quinone as electron acceptor. The chain is Dihydroorotate dehydrogenase (quinone) from Azorhizobium caulinodans (strain ATCC 43989 / DSM 5975 / JCM 20966 / LMG 6465 / NBRC 14845 / NCIMB 13405 / ORS 571).